We begin with the raw amino-acid sequence, 548 residues long: Chaperonin GroEL (548 aa).

ATP-binding positions include 30–33 (TLGP), Lys51, 87–91 (DGTTT), Gly415, 479–481 (NAA), and Asp495.

It belongs to the chaperonin (HSP60) family. In terms of assembly, forms a cylinder of 14 subunits composed of two heptameric rings stacked back-to-back. Interacts with the co-chaperonin GroES.

It localises to the cytoplasm. The catalysed reaction is ATP + H2O + a folded polypeptide = ADP + phosphate + an unfolded polypeptide.. Functionally, together with its co-chaperonin GroES, plays an essential role in assisting protein folding. The GroEL-GroES system forms a nano-cage that allows encapsulation of the non-native substrate proteins and provides a physical environment optimized to promote and accelerate protein folding. This Escherichia fergusonii (strain ATCC 35469 / DSM 13698 / CCUG 18766 / IAM 14443 / JCM 21226 / LMG 7866 / NBRC 102419 / NCTC 12128 / CDC 0568-73) protein is Chaperonin GroEL.